Here is a 219-residue protein sequence, read N- to C-terminus: Small ribosomal subunit protein uS3 (219 aa).

Residues Val38–Lys106 form the KH type-2 domain.

Belongs to the universal ribosomal protein uS3 family. In terms of assembly, part of the 30S ribosomal subunit. Forms a tight complex with proteins S10 and S14.

Its function is as follows. Binds the lower part of the 30S subunit head. Binds mRNA in the 70S ribosome, positioning it for translation. This Desulfitobacterium hafniense (strain DSM 10664 / DCB-2) protein is Small ribosomal subunit protein uS3.